The primary structure comprises 1013 residues: Poly [ADP-ribose] polymerase 1 (1013 aa).

Ala-2 bears the N-acetylalanine mark. Residues 9–93 (YRVQYAKSGR…KVKKTAEAGG (85 aa)) form a PARP-type 1 zinc finger. Residues Cys-21 and Cys-24 each coordinate Zn(2+). Phosphoserine is present on Ser-41. Residues His-53 and Cys-56 each contribute to the Zn(2+) site. Lys-97 and Lys-105 each carry N6-acetyllysine. The segment at 113–203 (FAAEYAKSNR…ALKKQLPAIK (91 aa)) adopts a PARP-type 2 zinc-finger fold. Zn(2+) is bound by residues Cys-125 and Cys-128. An N6-acetyllysine modification is found at Lys-131. Zn(2+)-binding residues include His-159 and Cys-162. Residues Ser-177, Ser-179, and Ser-185 each carry the phosphoserine modification. Residue Lys-192 forms a Glycyl lysine isopeptide (Lys-Gly) (interchain with G-Cter in SUMO2) linkage. The disordered stretch occupies residues 200-226 (PAIKNEGKRKGDEVDGTDEVAKKKSRK). Lys-203 participates in a covalent cross-link: Glycyl lysine isopeptide (Lys-Gly) (interchain with G-Cter in SUMO1); alternate. Lys-203 participates in a covalent cross-link: Glycyl lysine isopeptide (Lys-Gly) (interchain with G-Cter in SUMO2); alternate. Residues 204 to 226 (NEGKRKGDEVDGTDEVAKKKSRK) show a composition bias toward basic and acidic residues. 2 short sequence motifs (nuclear localization signal) span residues 207-209 (KRK) and 221-226 (KKKSRK). A PADR1 zinc-binding domain is found at 225–359 (RKETDKYSKL…VKKQDRIFPP (135 aa)). Lys-249 is covalently cross-linked (Glycyl lysine isopeptide (Lys-Gly) (interchain with G-Cter in SUMO2)). Residues Ser-274 and Ser-277 each carry the phosphoserine modification. The zinc ribbon stretch occupies residues 290 to 332 (GALLPCKECSGQLVFKSDAYYCTGDVTAWTKCMVKTQNPSRKE). Residues Cys-295, Cys-298, Cys-311, and Cys-321 each contribute to the Zn(2+) site. Residues 373-523 (VTSAPTAVNS…GVNKSEKRMK (151 aa)) form an automodification domain region. The 92-residue stretch at 385–476 (PADKPLSNMK…KSLQDLLSAH (92 aa)) folds into the BRCT domain. Position 387 is a polyADP-ribosyl aspartic acid (Asp-387). PolyADP-ribosyl glutamic acid is present on residues Glu-407, Glu-413, Glu-435, Glu-437, Glu-444, Glu-445, Glu-448, and Glu-456. Lys-467 participates in a covalent cross-link: Glycyl lysine isopeptide (Lys-Gly) (interchain with G-Cter in SUMO2). The residue at position 484 (Glu-484) is a PolyADP-ribosyl glutamic acid. Lys-486 participates in a covalent cross-link: Glycyl lysine isopeptide (Lys-Gly) (interchain with G-Cter in SUMO1); alternate. A Glycyl lysine isopeptide (Lys-Gly) (interchain with G-Cter in SUMO2); alternate cross-link involves residue Lys-486. 2 positions are modified to polyADP-ribosyl glutamic acid: Glu-488 and Glu-491. Positions 489–508 (PGEVVAPRGKSAAPSKKSKG) are disordered. Residues 494-503 (APRGKSAAPS) show a composition bias toward low complexity. ADP-ribosylserine occurs at positions 499, 503, and 506. Residue Lys-511 forms a Glycyl lysine isopeptide (Lys-Gly) (interchain with G-Cter in SUMO2) linkage. Residues Glu-512 and Glu-513 each carry the polyADP-ribosyl glutamic acid modification. Ser-518 bears the ADP-ribosylserine mark. Residue Glu-519 is modified to PolyADP-ribosyl glutamic acid. Residue Lys-520 is modified to N6-(ADP-ribosyl)lysine. Residue Lys-527 forms a Glycyl lysine isopeptide (Lys-Gly) (interchain with G-Cter in SUMO2) linkage. The WGR domain occupies 541 to 637 (SAHVLEKGGK…KNFTKYPKKF (97 aa)). A Phosphothreonine modification is found at Thr-593. Lys-599 and Lys-620 each carry N6-acetyllysine. The region spanning 661-778 (KSKLPKPVQE…DIEVAYSLLR (118 aa)) is the PARP alpha-helical domain. A Glycyl lysine isopeptide (Lys-Gly) (interchain with G-Cter in SUMO1); alternate cross-link involves residue Lys-747. Lys-747 participates in a covalent cross-link: Glycyl lysine isopeptide (Lys-Gly) (interchain with G-Cter in SUMO2); alternate. A phosphoserine mark is found at Ser-781 and Ser-785. The 227-residue stretch at 787 to 1013 (DPIDVNYEKL…LKFNFKTSLW (227 aa)) folds into the PARP catalytic domain. NAD(+) contacts are provided by residues 861 to 863 (HGS), Gly-870, Arg-877, and Ser-903. Glu-987 (for poly [ADP-ribose] polymerase activity) is an active-site residue.

The protein belongs to the ARTD/PARP family. Homodimer; PARP-type zinc-fingers from separate PARP1 molecules form a dimer module that specifically recognizes DNA strand breaks. Heterodimer; heterodimerizes with PARP2. Interacts (via the PARP catalytic domain) with HPF1. Interacts with NMNAT1. Interacts with nucleosomes; with a preference for nucleosomes containing H2A.X. Interacts with APTX. Component of a base excision repair (BER) complex, containing at least XRCC1, PARP1, PARP2, POLB and LRIG3. Interacts with SRY. The SWAP complex consists of NPM1, NCL, PARP1 and SWAP70. Interacts with TIAM2. Interacts with PARP3; leading to activate PARP1 in absence of DNA. Interacts (when poly-ADP-ribosylated) with CHD1L (via macro domain). Interacts with the DNA polymerase alpha catalytic subunit POLA1; this interaction functions as part of the control of replication fork progression. Interacts with EEF1A1 and TXK. Interacts with RNF4. Interacts with RNF146. Interacts with ZNF423. Interacts with APLF. Interacts with SNAI1 (via zinc fingers); the interaction requires SNAI1 to be poly-ADP-ribosylated and non-phosphorylated (active) by GSK3B. Interacts (when poly-ADP-ribosylated) with PARP9. Interacts with NR4A3; activates PARP1 by improving acetylation of PARP1 and suppressing the interaction between PARP1 and SIRT1. Interacts (via catalytic domain) with PUM3; the interaction inhibits the poly-ADP-ribosylation activity of PARP1 and the degradation of PARP1 by CASP3 following genotoxic stress. Interacts with ZNF365. Interacts with RRP1B. Interacts with TIMELESS; the interaction is direct. Interacts with CGAS; leading to impede the formation of the PARP1-TIMELESS complex. Interacts with KHDC3L, the interaction is increased following the formation of DNA double-strand breaks. Interacts (when auto-poly-ADP-ribosylated) with XRCC1; leading to inhibit PARP1 ADP-ribosyltransferase activity. Interacts with SPINDOC; promoting PARP1 ADP-ribosyltransferase activity. Interacts with BANF1; leading to inhibit PARP1 ADP-ribosyltransferase activity in response to oxidative DNA damage. Interacts (when sumoylated and ubiquitinated) with VCP/p97; leading to its extraction from chromatin. Interacts with YARS1; promoting PARP1 ADP-ribosyltransferase activity. Interacts with PACMP micropeptide; Interacts with PACMP micropeptide; interaction. Interacts (when poly-ADP-ribosylated) with isoform 1 of MACROH2A1; MACROH2A1 specifically binds to poly-ADP-ribose chains and inhibits PARP1 activity, limiting the consumption of nuclear NAD(+). Interacts with CARM1; promoting recruitment to replication forks. Interacts with RECQL. Interacts with ZNF32; the interaction reshapes ZNF432 interacting proteins. Interacts with TPRN; TPRN interacts with a number of DNA damage response proteins, is recruited to sites of DNA damage and may play a role in DNA damage repair. In terms of assembly, interacts (when auto-poly-ADP-ribosylated) with AIFM1. Poly-ADP-ribosylated on serine, glutamate and aspartate residues by autocatalysis. Auto-ADP-ribosylation on serine takes place following interaction with HPF1. Auto poly-ADP-ribosylation on serine residues promotes its dissociation from chromatin. Poly-ADP-ribosylated by PARP2; poly-ADP-ribosylation mediates the recruitment of CHD1L to DNA damage sites. Mono-ADP-ribosylated at Lys-520 by SIRT6 in response to oxidative stress, promoting recruitment to double-strand breaks (DSBs) sites. In terms of processing, S-nitrosylated, leading to inhibit transcription regulation activity. Post-translationally, phosphorylated at Thr-593 by PRKDC in response to DNA damage following virus infection, promoting its translocation to the cytosol. Phosphorylated by TXK. Proteolytically cleaved by caspase-3 (CASP3) and caspase-7 (CASP7) in response to apoptosis to generate the Poly [ADP-ribose] polymerase 1, processed N-terminus and Poly [ADP-ribose] polymerase 1, processed C-terminus forms. In terms of processing, sumoylated with SUMO1 or SUMO2 by PIAS4 following prolonged residence (trapping) to chromatin. Sumoylation promotes ubiquitination by RNF4 and removal from chromatin by VCP/p97. Post-translationally, ubiquitinated by RNF4 following sumoylation by PIAS4 in response to prolonged residence (trapping) to chromatin. Ubiquitination promotes removal from chromatin by VCP/p97. Widely expressed. Expression is correlated with proliferation, with higher levels occurring during early fetal development and organogenesis and in the highly proliferative cell compartments of adult. Expressed in B-cells that have been induced to switch to various Ig isotypes.

The protein localises to the chromosome. Its subcellular location is the nucleus. It is found in the nucleolus. It localises to the cytoplasm. The protein resides in the cytosol. It carries out the reaction NAD(+) + (ADP-D-ribosyl)n-acceptor = nicotinamide + (ADP-D-ribosyl)n+1-acceptor + H(+).. The catalysed reaction is L-seryl-[protein] + NAD(+) = O-(ADP-D-ribosyl)-L-seryl-[protein] + nicotinamide + H(+). The enzyme catalyses L-aspartyl-[protein] + NAD(+) = 4-O-(ADP-D-ribosyl)-L-aspartyl-[protein] + nicotinamide. It catalyses the reaction L-glutamyl-[protein] + NAD(+) = 5-O-(ADP-D-ribosyl)-L-glutamyl-[protein] + nicotinamide. It carries out the reaction L-tyrosyl-[protein] + NAD(+) = O-(ADP-D-ribosyl)-L-tyrosyl-[protein] + nicotinamide + H(+). The catalysed reaction is L-histidyl-[protein] + NAD(+) = N(tele)-(ADP-D-ribosyl)-L-histidyl-[protein] + nicotinamide + H(+). ADP-ribosyltransferase activity is regulated via an allosteric activation mechanism. In absence of activation signal, PARP1 is autoinhibited by the PARP alpha-helical domain (also named HD region), which prevents effective NAD(+)-binding. Activity is highly stimulated by signals, such as DNA strand breaks. Binding to damaged DNA unfolds the PARP alpha-helical domain, relieving autoinhibition. Poly-ADP-ribosyltransferase activity is tightly regulated and PARP1 is removed from damaged chromatin following initial poly-ADP-ribosylation of chromatin to avoid prolonged residence (trapping) that has cytotoxic consequences. A number of factors (VCP/p97) or post-translational modifications (auto-poly-ADP-ribosylation or ubiquitination) promote PARP1 removal from chromatin. Its function is as follows. Poly-ADP-ribosyltransferase that mediates poly-ADP-ribosylation of proteins and plays a key role in DNA repair. Mediates glutamate, aspartate, serine, histidine or tyrosine ADP-ribosylation of proteins: the ADP-D-ribosyl group of NAD(+) is transferred to the acceptor carboxyl group of target residues and further ADP-ribosyl groups are transferred to the 2'-position of the terminal adenosine moiety, building up a polymer with an average chain length of 20-30 units. Serine ADP-ribosylation of proteins constitutes the primary form of ADP-ribosylation of proteins in response to DNA damage. Specificity for the different amino acids is conferred by interacting factors, such as HPF1 and NMNAT1. Following interaction with HPF1, catalyzes serine ADP-ribosylation of target proteins; HPF1 confers serine specificity by completing the PARP1 active site. Also catalyzes tyrosine ADP-ribosylation of target proteins following interaction with HPF1. Following interaction with NMNAT1, catalyzes glutamate and aspartate ADP-ribosylation of target proteins; NMNAT1 confers glutamate and aspartate specificity. PARP1 initiates the repair of DNA breaks: recognizes and binds DNA breaks within chromatin and recruits HPF1, licensing serine ADP-ribosylation of target proteins, such as histones (H2BS6ADPr and H3S10ADPr), thereby promoting decompaction of chromatin and the recruitment of repair factors leading to the reparation of DNA strand breaks. HPF1 initiates serine ADP-ribosylation but restricts the polymerase activity of PARP1 in order to limit the length of poly-ADP-ribose chains. In addition to base excision repair (BER) pathway, also involved in double-strand breaks (DSBs) repair: together with TIMELESS, accumulates at DNA damage sites and promotes homologous recombination repair by mediating poly-ADP-ribosylation. Mediates the poly-ADP-ribosylation of a number of proteins, including itself, APLF, CHFR and NFAT5. In addition to proteins, also able to ADP-ribosylate DNA: catalyzes ADP-ribosylation of DNA strand break termini containing terminal phosphates and a 2'-OH group in single- and double-stranded DNA, respectively. Required for PARP9 and DTX3L recruitment to DNA damage sites. PARP1-dependent PARP9-DTX3L-mediated ubiquitination promotes the rapid and specific recruitment of 53BP1/TP53BP1, UIMC1/RAP80, and BRCA1 to DNA damage sites. PARP1-mediated DNA repair in neurons plays a role in sleep: senses DNA damage in neurons and promotes sleep, facilitating efficient DNA repair. In addition to DNA repair, also involved in other processes, such as transcription regulation, programmed cell death, membrane repair, adipogenesis and innate immunity. Acts as a repressor of transcription: binds to nucleosomes and modulates chromatin structure in a manner similar to histone H1, thereby altering RNA polymerase II. Acts both as a positive and negative regulator of transcription elongation, depending on the context. Acts as a positive regulator of transcription elongation by mediating poly-ADP-ribosylation of NELFE, preventing RNA-binding activity of NELFE and relieving transcription pausing. Acts as a negative regulator of transcription elongation in response to DNA damage by catalyzing poly-ADP-ribosylation of CCNT1, disrupting the phase separation activity of CCNT1 and subsequent activation of CDK9. Involved in replication fork progression following interaction with CARM1: mediates poly-ADP-ribosylation at replication forks, slowing fork progression. Poly-ADP-ribose chains generated by PARP1 also play a role in poly-ADP-ribose-dependent cell death, a process named parthanatos. Also acts as a negative regulator of the cGAS-STING pathway. Acts by mediating poly-ADP-ribosylation of CGAS: PARP1 translocates into the cytosol following phosphorylation by PRKDC and catalyzes poly-ADP-ribosylation and inactivation of CGAS. Acts as a negative regulator of adipogenesis: catalyzes poly-ADP-ribosylation of histone H2B on 'Glu-35' (H2BE35ADPr) following interaction with NMNAT1, inhibiting phosphorylation of H2B at 'Ser-36' (H2BS36ph), thereby blocking expression of pro-adipogenetic genes. Involved in the synthesis of ATP in the nucleus, together with NMNAT1, PARG and NUDT5. Nuclear ATP generation is required for extensive chromatin remodeling events that are energy-consuming. Promotes AIFM1-mediated apoptosis. This form, which translocates into the cytoplasm following cleavage by caspase-3 (CASP3) and caspase-7 (CASP7) in response to apoptosis, is auto-poly-ADP-ribosylated and serves as a poly-ADP-ribose carrier to induce AIFM1-mediated apoptosis. Functionally, this cleavage form irreversibly binds to DNA breaks and interferes with DNA repair, promoting DNA damage-induced apoptosis. The polypeptide is Poly [ADP-ribose] polymerase 1 (Parp1) (Mus musculus (Mouse)).